The sequence spans 203 residues: Putative archaetidylserine decarboxylase proenzyme (203 aa).

S171 serves as the catalytic Schiff-base intermediate with substrate; via pyruvic acid. S171 carries the pyruvic acid (Ser); by autocatalysis modification.

It belongs to the phosphatidylserine decarboxylase family. PSD-A subfamily. In terms of assembly, heterodimer of a large membrane-associated beta subunit and a small pyruvoyl-containing alpha subunit. Pyruvate is required as a cofactor. Is synthesized initially as an inactive proenzyme. Formation of the active enzyme involves a self-maturation process in which the active site pyruvoyl group is generated from an internal serine residue via an autocatalytic post-translational modification. Two non-identical subunits are generated from the proenzyme in this reaction, and the pyruvate is formed at the N-terminus of the alpha chain, which is derived from the carboxyl end of the proenzyme. The post-translation cleavage follows an unusual pathway, termed non-hydrolytic serinolysis, in which the side chain hydroxyl group of the serine supplies its oxygen atom to form the C-terminus of the beta chain, while the remainder of the serine residue undergoes an oxidative deamination to produce ammonia and the pyruvoyl prosthetic group on the alpha chain.

It localises to the cell membrane. The catalysed reaction is archaetidylserine + H(+) = archaetidylethanolamine + CO2. Its function is as follows. Catalyzes the formation of archaetidylethanolamine (PtdEtn) from archaetidylserine (PtdSer). The protein is Putative archaetidylserine decarboxylase proenzyme of Methanosarcina barkeri (strain Fusaro / DSM 804).